Reading from the N-terminus, the 216-residue chain is Guanylate kinase (216 aa).

The region spanning 12–191 (GLLFVISSPS…CVKQVKNILT (180 aa)) is the Guanylate kinase-like domain. 19–26 (SPSGAGKS) lines the ATP pocket.

The protein belongs to the guanylate kinase family.

Its subcellular location is the cytoplasm. It carries out the reaction GMP + ATP = GDP + ADP. Essential for recycling GMP and indirectly, cGMP. The chain is Guanylate kinase from Zymomonas mobilis subsp. mobilis (strain ATCC 31821 / ZM4 / CP4).